A 175-amino-acid polypeptide reads, in one-letter code: NADH-ubiquinone oxidoreductase chain 6 (175 aa).

5 consecutive transmembrane segments (helical) span residues 1 to 21 (MMTYIVFILSTIFVISFVGFS), 25 to 45 (SPIYGGVGLIVSGGVGCGIVM), 47 to 67 (FGGSFLGLMVFLIYLGGMLVV), 88 to 108 (VVMGAFISGLIVEVVFVLCVL), and 149 to 169 (YGVWLVIVTGWSLLIGVIVVL).

Belongs to the complex I subunit 6 family.

It localises to the mitochondrion membrane. The enzyme catalyses a ubiquinone + NADH + 5 H(+)(in) = a ubiquinol + NAD(+) + 4 H(+)(out). Functionally, core subunit of the mitochondrial membrane respiratory chain NADH dehydrogenase (Complex I) that is believed to belong to the minimal assembly required for catalysis. Complex I functions in the transfer of electrons from NADH to the respiratory chain. The immediate electron acceptor for the enzyme is believed to be ubiquinone. This is NADH-ubiquinone oxidoreductase chain 6 (MT-ND6) from Rhinolophus monoceros (Formosan lesser horseshoe bat).